Here is a 445-residue protein sequence, read N- to C-terminus: Argininosuccinate synthase (445 aa).

Residues Ala17–Ser25 and Ala43 each bind ATP. Tyr99 contributes to the L-citrulline binding site. Gly129 and Thr131 together coordinate ATP. L-aspartate contacts are provided by Thr131, Asn135, and Asp136. Asn135 provides a ligand contact to L-citrulline. ATP is bound at residue Asp136. Residues Arg139 and Ser192 each contribute to the L-citrulline site. Asp194 contributes to the ATP binding site. L-citrulline contacts are provided by Thr201, Glu203, and Glu280.

The protein belongs to the argininosuccinate synthase family. Type 2 subfamily. Homotetramer.

It localises to the cytoplasm. The catalysed reaction is L-citrulline + L-aspartate + ATP = 2-(N(omega)-L-arginino)succinate + AMP + diphosphate + H(+). Its pathway is amino-acid biosynthesis; L-arginine biosynthesis; L-arginine from L-ornithine and carbamoyl phosphate: step 2/3. The polypeptide is Argininosuccinate synthase (Afipia carboxidovorans (strain ATCC 49405 / DSM 1227 / KCTC 32145 / OM5) (Oligotropha carboxidovorans)).